Here is an 82-residue protein sequence, read N- to C-terminus: Small ribosomal subunit protein uS17 (82 aa).

Belongs to the universal ribosomal protein uS17 family. Part of the 30S ribosomal subunit.

Its function is as follows. One of the primary rRNA binding proteins, it binds specifically to the 5'-end of 16S ribosomal RNA. The protein is Small ribosomal subunit protein uS17 of Sulfurimonas denitrificans (strain ATCC 33889 / DSM 1251) (Thiomicrospira denitrificans (strain ATCC 33889 / DSM 1251)).